Reading from the N-terminus, the 587-residue chain is MSLFKVYARALRYLGAYKLRVSLVVIANIVLATITIAEPILFGRIIDAISGKGEVKPILFMWAAFAVFNTVAFVLVSREADRLAHGRRATLLTEAFGRIISMPLAWHHQRGTSNALHTLLRACETLFGLWLEFMRNHLSTVIALALLVPTAMSMDLRLSAVLIVLGIAYWLIGRVVMSRTKDGQASVENHYHTVFSHVSDSISNVSVLHSYNRIEAETKALKSFANRLLEAQYPVLDWWALASALNRMASTIAMMVVLIIGTMLVQSGELRIGDVIAFIGFANLLIARLDLMRQFATQIFEARSKLEDFYTLEDSVRDREEPAGNGEIKNVKGAIEFRDVSFGFGNSSQGLHNVSFSVKAGQTVAIVGPTGAGKTTLVNLLQRVYDPQGGQILVDGTDITKVTRKSLRRHIATVFQDAGLLNRSISDNIRLGREGASEEDMRRAAEAAAAADFIETREDRYDTHVGERGNKLSGGERQRIAIARAILKDAPILVLDEATSALDVETEARVKAAIDNLRQNRTTFIIAHRLSTVREADMVLFLDDGRVVEQGGFDELSHSNGRFAALLRASGILTDEEVRKAHTTEAA.

In terms of domain architecture, ABC transmembrane type-1 spans 21–301 (VSLVVIANIV…MRQFATQIFE (281 aa)). A run of 6 helical transmembrane segments spans residues 23 to 43 (LVVIANIVLATITIAEPILFG), 57 to 77 (PILFMWAAFAVFNTVAFVLVS), 126 to 146 (LFGLWLEFMRNHLSTVIALAL), 158 to 178 (LSAVLIVLGIAYWLIGRVVMS), 248 to 268 (MASTIAMMVVLIIGTMLVQSG), and 272 to 292 (IGDVIAFIGFANLLIARLDLM). The ABC transporter domain maps to 335–569 (IEFRDVSFGF…NGRFAALLRA (235 aa)). Residue 368–375 (GPTGAGKT) participates in ATP binding.

Belongs to the ABC transporter superfamily. Beta-(1--&gt;2)glucan exporter (TC 3.A.1.108.1) family. In terms of assembly, homodimer.

It localises to the cell inner membrane. The enzyme catalyses [(1-&gt;2)-beta-D-glucosyl](n)(in) + ATP + H2O = [(1-&gt;2)-beta-D-glucosyl](n)(out) + ADP + phosphate + H(+). Functionally, involved in beta-(1--&gt;2)glucan export. Transmembrane domains (TMD) form a pore in the inner membrane and the ATP-binding domain (NBD) is responsible for energy generation. This Rhizobium etli (strain ATCC 51251 / DSM 11541 / JCM 21823 / NBRC 15573 / CFN 42) protein is Beta-(1--&gt;2)glucan export ATP-binding/permease protein NdvA.